A 285-amino-acid polypeptide reads, in one-letter code: Tetraspanin-3 (285 aa).

At Met1–His6 the chain is on the cytoplasmic side. A helical membrane pass occupies residues Leu7 to Ile27. The Extracellular portion of the chain corresponds to Trp28–Gln43. Residue Asn34 is glycosylated (N-linked (GlcNAc...) asparagine). Residues Trp44–Ala64 form a helical membrane-spanning segment. The Cytoplasmic segment spans residues Cys65–Leu71. Residues Met72–Phe92 traverse the membrane as a helical segment. Topologically, residues Ala93–Lys235 are extracellular. N-linked (GlcNAc...) asparagine glycosylation occurs at Asn187. The helical transmembrane segment at Val236–Ala256 threads the bilayer. The Cytoplasmic portion of the chain corresponds to Ala257–Leu285.

It belongs to the tetraspanin (TM4SF) family.

The protein localises to the cell membrane. May be involved in the regulation of cell differentiation. The chain is Tetraspanin-3 (TET3) from Arabidopsis thaliana (Mouse-ear cress).